We begin with the raw amino-acid sequence, 156 residues long: Lipoprotein signal peptidase (156 aa).

Helical transmembrane passes span 37 to 57 (VIPGFFNLVHVVNKGAAFGFL), 68 to 88 (FFVVVTIIALGAIGMLLKSAE), and 95 to 115 (ILGLGFVLGGAIGNLIDRILY). Catalysis depends on residues D120 and D138. A helical transmembrane segment spans residues 133-153 (AFNVADIAICLGAFAMIVSFY).

Belongs to the peptidase A8 family.

The protein localises to the cell inner membrane. It catalyses the reaction Release of signal peptides from bacterial membrane prolipoproteins. Hydrolyzes -Xaa-Yaa-Zaa-|-(S,diacylglyceryl)Cys-, in which Xaa is hydrophobic (preferably Leu), and Yaa (Ala or Ser) and Zaa (Gly or Ala) have small, neutral side chains.. Its pathway is protein modification; lipoprotein biosynthesis (signal peptide cleavage). This protein specifically catalyzes the removal of signal peptides from prolipoproteins. This is Lipoprotein signal peptidase from Maridesulfovibrio salexigens (strain ATCC 14822 / DSM 2638 / NCIMB 8403 / VKM B-1763) (Desulfovibrio salexigens).